Consider the following 73-residue polypeptide: Large ribosomal subunit protein bL31 (73 aa).

It belongs to the bacterial ribosomal protein bL31 family. Type A subfamily. In terms of assembly, part of the 50S ribosomal subunit.

In terms of biological role, binds the 23S rRNA. The chain is Large ribosomal subunit protein bL31 from Chelativorans sp. (strain BNC1).